We begin with the raw amino-acid sequence, 398 residues long: DNA replication and repair protein RecF (398 aa).

Gly-30–Thr-37 is an ATP binding site.

This sequence belongs to the RecF family.

The protein localises to the cytoplasm. The RecF protein is involved in DNA metabolism; it is required for DNA replication and normal SOS inducibility. RecF binds preferentially to single-stranded, linear DNA. It also seems to bind ATP. This Corynebacterium efficiens (strain DSM 44549 / YS-314 / AJ 12310 / JCM 11189 / NBRC 100395) protein is DNA replication and repair protein RecF.